Reading from the N-terminus, the 4538-residue chain is Polyketide synthase PksL (4538 aa).

Residues 1 to 123 (MRWRSNVKKI…ADMHADSPAI (123 aa)) form an N-terminal hotdog fold 1 region. The PKS/mFAS DH 1 domain occupies 1-285 (MRWRSNVKKI…SKLVREAELI (285 aa)). His26 functions as the Proton acceptor; for dehydratase activity 1 in the catalytic mechanism. The interval 138-285 (QNVVQLDDVY…SKLVREAELI (148 aa)) is C-terminal hotdog fold 1. Asp199 acts as the Proton donor; for dehydratase activity 1 in catalysis. Positions 289–314 (HQDAQETQMTRADTAERDKPADMVSS) are disordered. Residues 320-394 (SEAEQFVSQL…ELSAFLAEEY (75 aa)) form the Carrier 1 domain. Ser354 carries the post-translational modification O-(pantetheine 4'-phosphoryl)serine. The Ketosynthase family 3 (KS3) 1 domain maps to 433 to 871 (AGDIAIIGLA…GSNAHIILEE (439 aa)). Catalysis depends on for beta-ketoacyl synthase 1 activity residues Cys609, His744, and His784. The dehydratase stretch occupies residues 1048–1226 (HILHPLLHQN…DSLYAGENGV (179 aa)). The segment at 1051 to 1175 (HPLLHQNVSD…GSAVLCEAGE (125 aa)) is N-terminal hotdog fold 2. In terms of domain architecture, PKS/mFAS DH 2 spans 1051–1340 (HPLLHQNVSD…ARVLETDQEG (290 aa)). His1080 acts as the Proton acceptor; for dehydratase activity 2 in catalysis. The tract at residues 1189 to 1340 (NGRTLSPFDC…ARVLETDQEG (152 aa)) is C-terminal hotdog fold 2. Asp1251 serves as the catalytic Proton donor; for dehydratase activity 2. Residues 1520–1713 (KGVYLITGGA…WKDGGMQIDA (194 aa)) are beta-ketoacyl reductase 1. A Carrier 2 domain is found at 1800–1873 (EKAENYFKQV…SLTRYFIDSR (74 aa)). Ser1834 is subject to O-(pantetheine 4'-phosphoryl)serine. Residues 1926-2365 (TEEIAIIGIS…GVNAHILIEE (440 aa)) enclose the Ketosynthase family 3 (KS3) 2 domain. Active-site for beta-ketoacyl synthase 2 activity residues include Cys2103, His2238, and His2278. The tract at residues 2546–2568 (TEEPFAPVQPVIPKPSVDREASG) is disordered. Carrier domains are found at residues 2597 to 2674 (ITAE…AHEL) and 2738 to 2815 (VAIE…KSEL). O-(pantetheine 4'-phosphoryl)serine occurs at positions 2634 and 2775. Positions 2828 to 2854 (SFEAAQQKPAASSHPKPAERPLQPVQH) are disordered. The region spanning 2873–3294 (EDAIAIVGMS…GTNAHIVIEE (422 aa)) is the Ketosynthase family 3 (KS3) 3 domain. Active-site for beta-ketoacyl synthase 3 activity residues include Cys3040, His3175, and His3215. The tract at residues 3686–3887 (DKVLLITGGT…PNWKETGLGE (202 aa)) is beta-ketoacyl reductase 2. Residues 3960-4037 (NLFPETVDWL…SFAHWLISKY (78 aa)) form the Carrier 5 domain. O-(pantetheine 4'-phosphoryl)serine is present on Ser3997. The Ketosynthase family 3 (KS3) 4 domain maps to 4082–4485 (AEDIAIIGLS…GTNAHLIIEG (404 aa)). Cys4237 serves as the catalytic For beta-ketoacyl synthase 4 activity.

The cofactor is pantetheine 4'-phosphate.

Its subcellular location is the cytoplasm. Its pathway is antibiotic biosynthesis; bacillaene biosynthesis. In terms of biological role, involved in some intermediate steps for the synthesis of the antibiotic polyketide bacillaene which is involved in secondary metabolism. In Bacillus subtilis (strain 168), this protein is Polyketide synthase PksL (pksL).